The chain runs to 502 residues: Intracellular exo-alpha-(1-&gt;5)-L-arabinofuranosidase (502 aa).

Residues Glu-29, Asn-74, and Asn-174 each coordinate alpha-L-arabinofuranose. Glu-175 acts as the Proton donor/acceptor in catalysis. Residues Tyr-246, Glu-294, and Gln-351 each contribute to the alpha-L-arabinofuranose site. Catalysis depends on Glu-294, which acts as the Nucleophile.

This sequence belongs to the glycosyl hydrolase 51 family. Homohexamer; trimer of dimers.

It localises to the cytoplasm. The enzyme catalyses Hydrolysis of terminal non-reducing alpha-L-arabinofuranoside residues in alpha-L-arabinosides.. The protein operates within glycan metabolism; L-arabinan degradation. Strongly inhibited by Hg(2+). Functionally, involved in the degradation of arabinan and is a key enzyme in the complete degradation of the plant cell wall. Catalyzes the cleavage of terminal alpha-(1-&gt;5)-arabinofuranosyl bonds in different hemicellulosic homopolysaccharides (branched and debranched arabinans). It acts preferentially on aryl-alpha-L-arabinofuranosides, and is much less effective on aryl-beta-D-xylopyranosides. The sequence is that of Intracellular exo-alpha-(1-&gt;5)-L-arabinofuranosidase (abfA) from Geobacillus stearothermophilus (Bacillus stearothermophilus).